The sequence spans 586 residues: CTP synthase 2 (586 aa).

Residues 300 to 554 (SIALVGKYTK…LAATGNLNAY (255 aa)) enclose the Glutamine amidotransferase type-1 domain. Residues Cys399, His526, and Glu528 each act as for GATase activity in the active site. Positions 564–586 (SDRYSDASDDSFSEPRLAELEIS) are disordered. Ser568, Ser571, and Ser574 each carry phosphoserine.

This sequence belongs to the CTP synthase family.

The enzyme catalyses UTP + L-glutamine + ATP + H2O = CTP + L-glutamate + ADP + phosphate + 2 H(+). Its pathway is pyrimidine metabolism; CTP biosynthesis via de novo pathway; CTP from UDP: step 2/2. Catalyzes the ATP-dependent amination of UTP to CTP with either L-glutamine or ammonia as the source of nitrogen. Constitutes the rate-limiting enzyme in the synthesis of cytosine nucleotides. This is CTP synthase 2 (CTPS2) from Bos taurus (Bovine).